Reading from the N-terminus, the 346-residue chain is Peroxidase 9 (346 aa).

Residues 1–23 form the signal peptide; that stretch reads MAISKLIPTLVLFVLFSFDVSVA. Cystine bridges form between Cys-54–Cys-134, Cys-87–Cys-92, Cys-140–Cys-342, and Cys-219–Cys-251. The Proton acceptor role is filled by His-85. 5 residues coordinate Ca(2+): Asp-86, Val-89, Gly-91, Asp-93, and Ser-95. Pro-182 lines the substrate pocket. Asn-185 carries an N-linked (GlcNAc...) asparagine glycan. Position 212 (His-212) interacts with heme b. Residue Thr-213 participates in Ca(2+) binding. Ca(2+) is bound by residues Asp-264, Ser-267, and Asp-272.

The protein belongs to the peroxidase family. Classical plant (class III) peroxidase subfamily. The cofactor is heme b. It depends on Ca(2+) as a cofactor.

It localises to the secreted. The catalysed reaction is 2 a phenolic donor + H2O2 = 2 a phenolic radical donor + 2 H2O. In terms of biological role, removal of H(2)O(2), oxidation of toxic reductants, biosynthesis and degradation of lignin, suberization, auxin catabolism, response to environmental stresses such as wounding, pathogen attack and oxidative stress. These functions might be dependent on each isozyme/isoform in each plant tissue. This Arabidopsis thaliana (Mouse-ear cress) protein is Peroxidase 9 (PER9).